Consider the following 213-residue polypeptide: Adenylate kinase (213 aa).

14–19 provides a ligand contact to ATP; the sequence is GSGKGT. The interval 34-63 is NMP; sequence STGDLLRAIIREGTPNGLKAKAYLDKGAFV. Residues threonine 35, arginine 40, 61–63, 89–92, and glutamine 96 each bind AMP; these read AFV and GFPR. Positions 129-162 are LID; the sequence is SRFLCPSCSRIYNTSQGHTECPDCHVPLIRRSDD. Residue arginine 130 participates in ATP binding. Zn(2+) contacts are provided by cysteine 133 and cysteine 136. 139-140 lines the ATP pocket; that stretch reads IY. Cysteine 149 and cysteine 152 together coordinate Zn(2+). AMP is bound by residues arginine 159 and arginine 170. Residue asparagine 198 coordinates ATP.

It belongs to the adenylate kinase family. As to quaternary structure, monomer.

The protein localises to the cytoplasm. The catalysed reaction is AMP + ATP = 2 ADP. It functions in the pathway purine metabolism; AMP biosynthesis via salvage pathway; AMP from ADP: step 1/1. Functionally, catalyzes the reversible transfer of the terminal phosphate group between ATP and AMP. Plays an important role in cellular energy homeostasis and in adenine nucleotide metabolism. This chain is Adenylate kinase, found in Chlamydia pneumoniae (Chlamydophila pneumoniae).